A 307-amino-acid polypeptide reads, in one-letter code: Ubiquitin recognition factor in ER-associated degradation protein 1 (307 aa).

The residue at position 1 (methionine 1) is an N-acetylmethionine. A phosphoserine mark is found at serine 129, serine 231, serine 245, serine 247, and serine 299. Disordered stretches follow at residues 230 to 255 (GSGN…GDIK) and 282 to 307 (EEDE…GRKP).

This sequence belongs to the UFD1 family. Interacts with USP13. Heterodimer with NPLOC4, this heterodimer binds VCP and inhibits Golgi membrane fusion. Interacts with ZFAND2B; probably through VCP.

The protein localises to the nucleus. Its subcellular location is the cytoplasm. The protein resides in the cytosol. Its pathway is protein degradation; proteasomal ubiquitin-dependent pathway. Its function is as follows. Essential component of the ubiquitin-dependent proteolytic pathway which degrades ubiquitin fusion proteins. The ternary complex containing UFD1, VCP and NPLOC4 binds ubiquitinated proteins and is necessary for the export of misfolded proteins from the ER to the cytoplasm, where they are degraded by the proteasome. The NPLOC4-UFD1-VCP complex regulates spindle disassembly at the end of mitosis and is necessary for the formation of a closed nuclear envelope. It may be involved in the development of some ectoderm-derived structures. Acts as a negative regulator of type I interferon production via the complex formed with VCP and NPLOC4, which binds to RIGI and recruits RNF125 to promote ubiquitination and degradation of RIGI. This is Ubiquitin recognition factor in ER-associated degradation protein 1 from Rattus norvegicus (Rat).